Reading from the N-terminus, the 458-residue chain is Aldehyde dehydrogenase (458 aa).

NADP(+) contacts are provided by residues 134–135, 158–161, and 210–211; these read WN, KHAS, and GS. Catalysis depends on glutamate 232, which acts as the Proton acceptor. Leucine 233 contributes to the NADP(+) binding site. Catalysis depends on cysteine 266, which acts as the Nucleophile. An NADP(+)-binding site is contributed by glutamate 363.

The protein belongs to the aldehyde dehydrogenase family. In terms of assembly, monomer.

The catalysed reaction is an aldehyde + NAD(+) + H2O = a carboxylate + NADH + 2 H(+). The enzyme catalyses an aldehyde + NADP(+) + H2O = a carboxylate + NADPH + 2 H(+). It participates in carbohydrate metabolism; D-xylose degradation. In terms of biological role, aldehyde dehydrogenase able to oxidize various aldehydes such as formaldehyde, glyceraldehyde, butyraldehyde, glutaraldehyde and benzaldehyde (in vitro). Is likely involved in the oxidative D-xylose degradation pathway, catalyzing the oxidation step of 2-oxoglutarate semialdehyde to 2-oxoglutarate. Is able to use both NAD(+) and NADP(+); however, shows a preference for NADP(+). Does not display succinate semialdehyde dehydrogenase activity. The protein is Aldehyde dehydrogenase (aldh) of Paenarthrobacter nicotinovorans (Arthrobacter nicotinovorans).